The sequence spans 553 residues: Transcription factor GAMYB (553 aa).

Basic and acidic residues predominate over residues 1–17; it reads MYRVKSESDCEMIHQEQ. Residues 1 to 45 are disordered; it reads MYRVKSESDCEMIHQEQMDSPVADDGSSGGSPHRGGGPPLKKGPW. The segment covering 27–38 has biased composition (gly residues); the sequence is SSGGSPHRGGGP. HTH myb-type domains are found at residues 37-89 and 90-144; these read GPPL…ANHL and RPNL…KRCQ. DNA-binding regions (H-T-H motif) lie at residues 65-89 and 117-140; these read WNAVQKNTGLFRCGKSCRLRWANHL and WARMAAHLPGRTDNEIKNYWNTRI. The segment at 464-488 is disordered; it reads PAQSTSMGSGEQVMGPKYEPGDTSP.

Its subcellular location is the nucleus. Functionally, transcriptional activator of gibberellin-dependent alpha-amylase expression in aleurone cells. Involved in pollen and floral organs development. May bind to the 5'-TAACAAA-3' box of alpha-amylase promoter. In Oryza sativa subsp. indica (Rice), this protein is Transcription factor GAMYB (GAM1).